Reading from the N-terminus, the 222-residue chain is Cysteine protease inhibitor 9 (222 aa).

An N-terminal signal peptide occupies residues 1–26 (MKSINILSFLLLSSTLSLVAFARSFS). A propeptide spanning residues 27–42 (SENPIVLPSTCHDDDN) is cleaved from the precursor. The short motif at 29 to 34 (NPIVLP) is the Vacuolar targeting signal element. 2 cysteine pairs are disulfide-bonded: C84-C136 and C185-C191.

It belongs to the protease inhibitor I3 (leguminous Kunitz-type inhibitor) family. In terms of tissue distribution, tuber.

The protein resides in the vacuole. Its function is as follows. Putative inhibitor of cysteine proteases. Does not inhibit papain. May protect the plant by inhibiting proteases of invading organisms. The polypeptide is Cysteine protease inhibitor 9 (Solanum tuberosum (Potato)).